We begin with the raw amino-acid sequence, 267 residues long: MASSCLLLACVVAAAMVSAVSCGPPKVPPGPNITAAYGKQWLEARGTWYGKPKGAGPDDNGGACGYKDIDKAPFLGMNSCGNDPIFKDGKGCGSCFEVKCSKPEACSDKPVIIHITDMNTEPIAAYHFDLSGHAFGAMAKEGKDEELRKAGIIDMQFRRVRCKYPGETKVTFHVEKGSNPNYFAVLVKYVGGDGDVVKVELKEKGSEEWKPLNESWGAIWRIDTPKPLKGPFSLRVTTESDQKLVANDVIPDNWKANALYKSEIQVD.

An N-terminal signal peptide occupies residues 1–22; that stretch reads MASSCLLLACVVAAAMVSAVSC. N-linked (GlcNAc...) asparagine glycosylation is present at Asn-32. One can recognise an Expansin-like EG45 domain in the interval 61–167; sequence GGACGYKDID…RRVRCKYPGE (107 aa). Intrachain disulfides connect Cys-64/Cys-92, Cys-95/Cys-162, and Cys-100/Cys-106. The Expansin-like CBD domain maps to 181 to 262; sequence NYFAVLVKYV…NWKANALYKS (82 aa). N-linked (GlcNAc...) asparagine glycosylation occurs at Asn-213.

This sequence belongs to the expansin family. Expansin B subfamily.

The protein resides in the secreted. It is found in the cell wall. Its subcellular location is the membrane. Its function is as follows. May cause loosening and extension of plant cell walls by disrupting non-covalent bonding between cellulose microfibrils and matrix glucans. No enzymatic activity has been found. May be required for rapid internodal elongation in deepwater rice during submergence. The polypeptide is Expansin-B10 (EXPB10) (Oryza sativa subsp. japonica (Rice)).